Here is a 257-residue protein sequence, read N- to C-terminus: Imidazole glycerol phosphate synthase subunit HisF (257 aa).

Residues Asp-11 and Asp-130 contribute to the active site.

This sequence belongs to the HisA/HisF family. In terms of assembly, heterodimer of HisH and HisF.

It localises to the cytoplasm. It carries out the reaction 5-[(5-phospho-1-deoxy-D-ribulos-1-ylimino)methylamino]-1-(5-phospho-beta-D-ribosyl)imidazole-4-carboxamide + L-glutamine = D-erythro-1-(imidazol-4-yl)glycerol 3-phosphate + 5-amino-1-(5-phospho-beta-D-ribosyl)imidazole-4-carboxamide + L-glutamate + H(+). It functions in the pathway amino-acid biosynthesis; L-histidine biosynthesis; L-histidine from 5-phospho-alpha-D-ribose 1-diphosphate: step 5/9. Its function is as follows. IGPS catalyzes the conversion of PRFAR and glutamine to IGP, AICAR and glutamate. The HisF subunit catalyzes the cyclization activity that produces IGP and AICAR from PRFAR using the ammonia provided by the HisH subunit. This chain is Imidazole glycerol phosphate synthase subunit HisF, found in Bradyrhizobium diazoefficiens (strain JCM 10833 / BCRC 13528 / IAM 13628 / NBRC 14792 / USDA 110).